The following is a 209-amino-acid chain: 3-demethoxyubiquinol 3-hydroxylase (209 aa).

Fe cation is bound by residues Glu58, Glu88, His91, Glu140, Glu172, and His175.

Belongs to the COQ7 family. Fe cation serves as cofactor.

Its subcellular location is the cell membrane. The enzyme catalyses a 5-methoxy-2-methyl-3-(all-trans-polyprenyl)benzene-1,4-diol + AH2 + O2 = a 3-demethylubiquinol + A + H2O. It participates in cofactor biosynthesis; ubiquinone biosynthesis. Functionally, catalyzes the hydroxylation of 2-nonaprenyl-3-methyl-6-methoxy-1,4-benzoquinol during ubiquinone biosynthesis. The sequence is that of 3-demethoxyubiquinol 3-hydroxylase from Polaromonas naphthalenivorans (strain CJ2).